The chain runs to 131 residues: M-zodatoxin-Lt8o (131 aa).

The first 20 residues, 1-20 (MKYFVVALALVAAFACIAES), serve as a signal peptide directing secretion. Residues 21 to 60 (KPAESEHELAEVEEENELADLEDAVWLEHLADLSDLEEAR) constitute a propeptide that is removed on maturation.

This sequence belongs to the cationic peptide 06 (cytoinsectotoxin) family. As to expression, expressed by the venom gland.

The protein resides in the secreted. In terms of biological role, insecticidal, cytolytic and antimicrobial peptide. Forms voltage-dependent, ion-permeable channels in membranes. At high concentration causes cell membrane lysis. The sequence is that of M-zodatoxin-Lt8o (cit 1-14) from Lachesana tarabaevi (Spider).